A 196-amino-acid chain; its full sequence is ECF RNA polymerase sigma factor SigK (196 aa).

Positions 39–105 (YDQTRARVYG…RAVDRVRSEQ (67 aa)) are sigma-70 factor domain-2. A Polymerase core binding motif is present at residues 62–65 (ETTQ). The segment at 142 to 191 (CLDSLTDVQRECIQLAYYDGLTYAQVADRLAANLATIKSRMRDGIRALRK) is sigma-70 factor domain-4. Positions 164–183 (YAQVADRLAANLATIKSRMR) form a DNA-binding region, H-T-H motif.

Belongs to the sigma-70 factor family. ECF subfamily. In terms of assembly, interacts transiently with the RNA polymerase catalytic core formed by RpoA, RpoB, RpoC and RpoZ (2 alpha, 1 beta, 1 beta' and 1 omega subunit) to form the RNA polymerase holoenzyme that can initiate transcription. Interacts (via sigma-70 factor domain 4) with anti-sigma-K factor RskA.

In terms of biological role, sigma factors are initiation factors that promote the attachment of RNA polymerase to specific initiation sites and are then released. Extracytoplasmic function (ECF) sigma factors are held in an inactive form by an anti-sigma factor until released by regulated intramembrane proteolysis. The chain is ECF RNA polymerase sigma factor SigK (sigK) from Mycolicibacterium vanbaalenii (strain DSM 7251 / JCM 13017 / BCRC 16820 / KCTC 9966 / NRRL B-24157 / PYR-1) (Mycobacterium vanbaalenii).